Consider the following 414-residue polypeptide: Serine hydroxymethyltransferase (414 aa).

Residues Leu121 and 125-127 each bind (6S)-5,6,7,8-tetrahydrofolate; that span reads GHL. Residue Lys229 is modified to N6-(pyridoxal phosphate)lysine.

Belongs to the SHMT family. Homodimer. Requires pyridoxal 5'-phosphate as cofactor.

Its subcellular location is the cytoplasm. It catalyses the reaction (6R)-5,10-methylene-5,6,7,8-tetrahydrofolate + glycine + H2O = (6S)-5,6,7,8-tetrahydrofolate + L-serine. It participates in one-carbon metabolism; tetrahydrofolate interconversion. It functions in the pathway amino-acid biosynthesis; glycine biosynthesis; glycine from L-serine: step 1/1. In terms of biological role, catalyzes the reversible interconversion of serine and glycine with tetrahydrofolate (THF) serving as the one-carbon carrier. This reaction serves as the major source of one-carbon groups required for the biosynthesis of purines, thymidylate, methionine, and other important biomolecules. Also exhibits THF-independent aldolase activity toward beta-hydroxyamino acids, producing glycine and aldehydes, via a retro-aldol mechanism. This is Serine hydroxymethyltransferase from Thiobacillus denitrificans (strain ATCC 25259 / T1).